The sequence spans 389 residues: Large envelope protein (389 aa).

Met1 is modified (N-acetylmethionine). Gly2 is lipidated: N-myristoyl glycine; by host. Positions 2-108 are pre-S1; it reads GQNLSTSNPL…PPLRDAHPQA (107 aa). The interval 2–163 is pre-S; sequence GQNLSTSNPL…FSKIGDLAPN (162 aa). Residues 2-170 are Virion surface; in external conformation-facing; that stretch reads GQNLSTSNPL…APNMENITSG (169 aa). Residues 2 to 242 are Intravirion; in internal conformation-facing; that stretch reads GQNLSTSNPL…PGYRWMCLRR (241 aa). The tract at residues 76-103 is disordered; sequence TLPANPPPAATNRQSGRQPTPLSPPLRD. Over residues 86–95 the composition is skewed to polar residues; it reads TNRQSGRQPT. Residues 109-163 are pre-S2; the sequence is MQWTSTTFHQALQDPRVRGLYFPAGGSSSGTVNPVPTTASPILSIFSKIGDLAPN. The chain crosses the membrane as a helical span at residues 171–191; it reads FLGPLLVLQAGFFLLTRILTI. Over 192-242 the chain is Intravirion; in external conformation; that stretch reads PQSLDSWWTSLNFLGGTTVCLGQNSQSPTSNHSPTSCPPTCPGYRWMCLRR. Residues 243–263 form a helical membrane-spanning segment; that stretch reads FIIFLFILLLCLIFLLVLLDY. Over 264-337 the chain is Virion surface; that stretch reads QGMLPVCPLI…WASARFSWLS (74 aa). N-linked (GlcNAc...) asparagine; by host glycosylation occurs at Asn309. Residues 338–358 traverse the membrane as a helical segment; it reads LLVPFVQWFAGLSPIVWLSVI. Over 359–364 the chain is Intravirion; it reads WMMWYW. Residues 365–387 traverse the membrane as a helical segment; it reads GPSLYSILSPFLPLLPIFFCLWA. Residues 388 to 389 lie on the Virion surface side of the membrane; sequence YI.

This sequence belongs to the orthohepadnavirus major surface antigen family. As to quaternary structure, in its internal form (Li-HBsAg), interacts with the capsid protein and with the isoform S. Interacts with host chaperone CANX. Associates with host chaperone CANX through its pre-S2 N glycan; this association may be essential for isoform M proper secretion. In terms of assembly, interacts with isoform L. Interacts with the antigens of satellite virus HDV (HDVAgs); this interaction is required for encapsidation of HDV genomic RNA. Post-translationally, isoform M is N-terminally acetylated by host at a ratio of 90%, and N-glycosylated by host at the pre-S2 region. Myristoylated.

It localises to the virion membrane. In terms of biological role, the large envelope protein exists in two topological conformations, one which is termed 'external' or Le-HBsAg and the other 'internal' or Li-HBsAg. In its external conformation the protein attaches the virus to cell receptors and thereby initiating infection. This interaction determines the species specificity and liver tropism. This attachment induces virion internalization predominantly through caveolin-mediated endocytosis. The large envelope protein also assures fusion between virion membrane and endosomal membrane. In its internal conformation the protein plays a role in virion morphogenesis and mediates the contact with the nucleocapsid like a matrix protein. Functionally, the middle envelope protein plays an important role in the budding of the virion. It is involved in the induction of budding in a nucleocapsid independent way. In this process the majority of envelope proteins bud to form subviral lipoprotein particles of 22 nm of diameter that do not contain a nucleocapsid. In Homo sapiens (Human), this protein is Large envelope protein.